The primary structure comprises 765 residues: Transcription factor RFX3 (765 aa).

Positions 189 to 264 (HLQWLLDNYE…YHYYGIRVKP (76 aa)) form a DNA-binding region, RFX-type winged-helix.

Belongs to the RFX family.

The protein localises to the nucleus. Its function is as follows. Transcription factor required for ciliogenesis and islet cell differentiation during endocrine pancreas development. This is Transcription factor RFX3 (rfx3) from Danio rerio (Zebrafish).